The following is a 362-amino-acid chain: O-methyltransferase 13 (362 aa).

S-adenosyl-L-homocysteine contacts are provided by Ser-181, Gly-205, Asp-228, Asp-248, and Lys-262. An S-adenosyl-L-methionine-binding site is contributed by Asp-228. The active-site Proton acceptor is His-266.

It belongs to the class I-like SAM-binding methyltransferase superfamily. Cation-independent O-methyltransferase family. As to quaternary structure, homodimer. In terms of tissue distribution, mainly expressed in vascular and cortical tissues.

It carries out the reaction dopamine + S-adenosyl-L-methionine = 3-methoxytyramine + S-adenosyl-L-homocysteine + H(+). The protein operates within aromatic compound metabolism. It participates in alkaloid biosynthesis. In terms of biological role, O-methyltransferase participating in the biosynthesis of natural products derived from phenylethylamine, including mescaline, a natural hallucinogen potentially used in psychotherapeutic treatments. Catalyzes the O-methylation of dopamine and 4,5-dihydroxy-3-methoxyphenethylamine. This Lophophora williamsii (Peyote) protein is O-methyltransferase 13.